The following is a 382-amino-acid chain: Dual-specificity RNA methyltransferase RlmN (382 aa).

Catalysis depends on E96, which acts as the Proton acceptor. In terms of domain architecture, Radical SAM core spans Q102 to D342. Residues C109 and C345 are joined by a disulfide bond. [4Fe-4S] cluster is bound by residues C116, C120, and C123. S-adenosyl-L-methionine-binding positions include G170 to E171, S202, S224 to H226, and N302. C345 (S-methylcysteine intermediate) is an active-site residue.

It belongs to the radical SAM superfamily. RlmN family. [4Fe-4S] cluster is required as a cofactor.

It is found in the cytoplasm. It catalyses the reaction adenosine(2503) in 23S rRNA + 2 reduced [2Fe-2S]-[ferredoxin] + 2 S-adenosyl-L-methionine = 2-methyladenosine(2503) in 23S rRNA + 5'-deoxyadenosine + L-methionine + 2 oxidized [2Fe-2S]-[ferredoxin] + S-adenosyl-L-homocysteine. The enzyme catalyses adenosine(37) in tRNA + 2 reduced [2Fe-2S]-[ferredoxin] + 2 S-adenosyl-L-methionine = 2-methyladenosine(37) in tRNA + 5'-deoxyadenosine + L-methionine + 2 oxidized [2Fe-2S]-[ferredoxin] + S-adenosyl-L-homocysteine. Functionally, specifically methylates position 2 of adenine 2503 in 23S rRNA and position 2 of adenine 37 in tRNAs. m2A2503 modification seems to play a crucial role in the proofreading step occurring at the peptidyl transferase center and thus would serve to optimize ribosomal fidelity. The polypeptide is Dual-specificity RNA methyltransferase RlmN (Pseudomonas fluorescens (strain SBW25)).